The sequence spans 206 residues: Crossover junction endodeoxyribonuclease RuvC (206 aa).

Active-site residues include Asp7, Glu67, and Asp138. 3 residues coordinate Mg(2+): Asp7, Glu67, and Asp138.

It belongs to the RuvC family. As to quaternary structure, homodimer which binds Holliday junction (HJ) DNA. The HJ becomes 2-fold symmetrical on binding to RuvC with unstacked arms; it has a different conformation from HJ DNA in complex with RuvA. In the full resolvosome a probable DNA-RuvA(4)-RuvB(12)-RuvC(2) complex forms which resolves the HJ. It depends on Mg(2+) as a cofactor.

It localises to the cytoplasm. It carries out the reaction Endonucleolytic cleavage at a junction such as a reciprocal single-stranded crossover between two homologous DNA duplexes (Holliday junction).. In terms of biological role, the RuvA-RuvB-RuvC complex processes Holliday junction (HJ) DNA during genetic recombination and DNA repair. Endonuclease that resolves HJ intermediates. Cleaves cruciform DNA by making single-stranded nicks across the HJ at symmetrical positions within the homologous arms, yielding a 5'-phosphate and a 3'-hydroxyl group; requires a central core of homology in the junction. The consensus cleavage sequence is 5'-(A/T)TT(C/G)-3'. Cleavage occurs on the 3'-side of the TT dinucleotide at the point of strand exchange. HJ branch migration catalyzed by RuvA-RuvB allows RuvC to scan DNA until it finds its consensus sequence, where it cleaves and resolves the cruciform DNA. The chain is Crossover junction endodeoxyribonuclease RuvC from Anaeromyxobacter sp. (strain Fw109-5).